We begin with the raw amino-acid sequence, 66 residues long: DNA-directed RNA polymerase subunit Rpo10 (66 aa).

4 residues coordinate Zn(2+): cysteine 7, cysteine 10, cysteine 44, and cysteine 45.

This sequence belongs to the archaeal Rpo10/eukaryotic RPB10 RNA polymerase subunit family. As to quaternary structure, part of the RNA polymerase complex. Zn(2+) is required as a cofactor.

It is found in the cytoplasm. The enzyme catalyses RNA(n) + a ribonucleoside 5'-triphosphate = RNA(n+1) + diphosphate. DNA-dependent RNA polymerase (RNAP) catalyzes the transcription of DNA into RNA using the four ribonucleoside triphosphates as substrates. The chain is DNA-directed RNA polymerase subunit Rpo10 from Pyrobaculum islandicum (strain DSM 4184 / JCM 9189 / GEO3).